A 258-amino-acid chain; its full sequence is MMNPLIIKLGGVLLDSEEALERLFSALVNYRESHQRPLVIVHGGGCVVDELMKGLNLPVKKKNGLRVTPADQIDIITGALAGTANKTLLAWAKKHQIAAVGLFLGDGDSVKVTQLDEELGHVGLAQPGSPKLINSLLENGYLPVVSSIGVTDEGQLMNVNADQAATALAATLGADLILLSDVSGILDGKGQRIAEMTAAKAEQLIEQGIITDGMIVKVNAALDAARTLGRPVDIASWRYAEQLPALFNGMPMGTRILA.

Substrate-binding positions include 44 to 45 (GG), R66, and N158. ATP contacts are provided by residues 181 to 186 (DVSGIL) and 209 to 211 (IIT).

Belongs to the acetylglutamate kinase family. ArgB subfamily. As to quaternary structure, homodimer.

It is found in the cytoplasm. The catalysed reaction is N-acetyl-L-glutamate + ATP = N-acetyl-L-glutamyl 5-phosphate + ADP. The protein operates within amino-acid biosynthesis; L-arginine biosynthesis; N(2)-acetyl-L-ornithine from L-glutamate: step 2/4. In terms of biological role, catalyzes the ATP-dependent phosphorylation of N-acetyl-L-glutamate. The polypeptide is Acetylglutamate kinase (Shigella flexneri).